Reading from the N-terminus, the 427-residue chain is Anhydro-N-acetylmuramic acid kinase (427 aa).

Position 32-39 (32-39) interacts with ATP; the sequence is GTSLDGMD.

The protein belongs to the anhydro-N-acetylmuramic acid kinase family.

The enzyme catalyses 1,6-anhydro-N-acetyl-beta-muramate + ATP + H2O = N-acetyl-D-muramate 6-phosphate + ADP + H(+). Its pathway is amino-sugar metabolism; 1,6-anhydro-N-acetylmuramate degradation. It functions in the pathway cell wall biogenesis; peptidoglycan recycling. In terms of biological role, catalyzes the specific phosphorylation of 1,6-anhydro-N-acetylmuramic acid (anhMurNAc) with the simultaneous cleavage of the 1,6-anhydro ring, generating MurNAc-6-P. Is required for the utilization of anhMurNAc either imported from the medium or derived from its own cell wall murein, and thus plays a role in cell wall recycling. The polypeptide is Anhydro-N-acetylmuramic acid kinase (Psychrobacter cryohalolentis (strain ATCC BAA-1226 / DSM 17306 / VKM B-2378 / K5)).